A 273-amino-acid chain; its full sequence is Exosporium protein C (273 aa).

It is found in the spore wall. The sequence is that of Exosporium protein C from Clostridium sporogenes (strain ATCC 15579).